The sequence spans 778 residues: Probable protein kinase DDB_G0291133 (778 aa).

Positions 129-162 (LSINNNNNNNNNNGGYKIPSSVNKNSNNYNSNSN) are disordered. The 286-residue stretch at 177–462 (FDVVCKLGSG…LDQILLNENI (286 aa)) folds into the Protein kinase domain. ATP-binding positions include 183–191 (LGSGSFSDV) and Lys206. Catalysis depends on Asp303, which acts as the Proton acceptor. Mg(2+) is bound by residues Asn308 and Asp321. Disordered regions lie at residues 478-509 (NIEN…DDNN), 562-697 (HFVR…GFYG), and 757-778 (SHPQ…QETN). The span at 578-590 (SDEEEDDDDDDDS) shows a compositional bias: acidic residues. The span at 599–651 (SLNNLNNSSSNIGISESNSNNSFSSILEENNESSSSSPLPSLSFSRRLSTSSL) shows a compositional bias: low complexity. Polar residues predominate over residues 652 to 670 (VTTISPKPNFNTSGNKLFS). The segment covering 671-693 (NENNNSNNNNNNNNNNQNNNNNN) has biased composition (low complexity). The span at 757–766 (SHPQESDKMS) shows a compositional bias: basic and acidic residues.

The protein belongs to the protein kinase superfamily. Ser/Thr protein kinase family. WEE1 subfamily.

It carries out the reaction L-seryl-[protein] + ATP = O-phospho-L-seryl-[protein] + ADP + H(+). It catalyses the reaction L-threonyl-[protein] + ATP = O-phospho-L-threonyl-[protein] + ADP + H(+). This chain is Probable protein kinase DDB_G0291133, found in Dictyostelium discoideum (Social amoeba).